We begin with the raw amino-acid sequence, 337 residues long: Dolichyl-phosphate beta-glucosyltransferase ALG5C (337 aa).

At 1–6 (MNDLPP) the chain is on the lumenal side. The chain crosses the membrane as a helical span at residues 7-27 (IANLISNILFVLLIITFLYAL). Topologically, residues 28–337 (CSRFVSDKTL…ADTPISDFEV (310 aa)) are cytoplasmic.

This sequence belongs to the glycosyltransferase 2 family.

The protein localises to the endoplasmic reticulum membrane. It catalyses the reaction a di-trans,poly-cis-dolichyl phosphate + UDP-alpha-D-glucose = a di-trans,poly-cis-dolichyl beta-D-glucosyl phosphate + UDP. It functions in the pathway protein modification; protein glycosylation. Functionally, dolichyl-phosphate beta-glucosyltransferase involved in the glycosylation of glycoproteins through the synthesis of dolichyl beta-D-glucosyl phosphate which serves as a sugar donor for transfer of three glucose residues to the Man-9-GlcNAc-2-PP-dolichol precursor to N-glycans. This chain is Dolichyl-phosphate beta-glucosyltransferase ALG5C, found in Trichomonas vaginalis (strain ATCC PRA-98 / G3).